Here is a 100-residue protein sequence, read N- to C-terminus: MARKSLIQRERKRQKLEQKYHLIRRSLKKEISKTPSLSDKWKIHGKLQSPPRNSAPIRLHRRCFSTGRPRANYRDFGLSGHVLREMVHACLLPGATRSSW.

The protein belongs to the universal ribosomal protein uS14 family. Part of the 30S ribosomal subunit.

Its subcellular location is the plastid. It localises to the chloroplast. In terms of biological role, binds 16S rRNA, required for the assembly of 30S particles. In Amborella trichopoda, this protein is Small ribosomal subunit protein uS14c.